The following is a 90-amino-acid chain: Hypnin-A3 (90 aa).

Functionally, lectin specific for core(alpha 1-6)fucosylated N-glycans. Inhibits platelet aggregation. The sequence is that of Hypnin-A3 from Hypnea japonica (Japanese red alga).